We begin with the raw amino-acid sequence, 72 residues long: SRY-related protein AES4 (72 aa).

A DNA-binding region (HMG box) is located at residues 1–69 (VKRPMNAFMV…KHMADYPDYK (69 aa)).

The protein localises to the nucleus. This Alligator mississippiensis (American alligator) protein is SRY-related protein AES4.